We begin with the raw amino-acid sequence, 555 residues long: Putative ankyrin repeat protein L283 (555 aa).

ANK repeat units lie at residues 364–389 (TKVN…EDDI), 390–420 (VFKK…DINE), 422–447 (IKLA…KVRC), and 455–488 (GYLE…EGGK).

The chain is Putative ankyrin repeat protein L283 from Acanthamoeba polyphaga mimivirus (APMV).